The primary structure comprises 120 residues: MFLLYEYDIFWAFLIISSLIPILAFFVSGVLAPINKGPEKLSSYESGIEPMGNAWLQFRIRYYMFALVFVVFDVETVFLYPWAMSFDVLGISVFVEALIFVLILIVGLVYAWRKGALEWS.

The next 3 helical transmembrane spans lie at 9-29 (IFWAFLIISSLIPILAFFVSG), 64-84 (MFALVFVVFDVETVFLYPWAM), and 88-108 (VLGISVFVEALIFVLILIVGL).

This sequence belongs to the complex I subunit 3 family. As to quaternary structure, NDH is composed of at least 16 different subunits, 5 of which are encoded in the nucleus.

The protein resides in the plastid. The protein localises to the chloroplast thylakoid membrane. It catalyses the reaction a plastoquinone + NADH + (n+1) H(+)(in) = a plastoquinol + NAD(+) + n H(+)(out). The catalysed reaction is a plastoquinone + NADPH + (n+1) H(+)(in) = a plastoquinol + NADP(+) + n H(+)(out). NDH shuttles electrons from NAD(P)H:plastoquinone, via FMN and iron-sulfur (Fe-S) centers, to quinones in the photosynthetic chain and possibly in a chloroplast respiratory chain. The immediate electron acceptor for the enzyme in this species is believed to be plastoquinone. Couples the redox reaction to proton translocation, and thus conserves the redox energy in a proton gradient. This is NAD(P)H-quinone oxidoreductase subunit 3, chloroplastic from Daucus carota (Wild carrot).